A 215-amino-acid chain; its full sequence is Peptide methionine sulfoxide reductase MsrA (215 aa).

Residue cysteine 58 is part of the active site.

It belongs to the MsrA Met sulfoxide reductase family.

The enzyme catalyses L-methionyl-[protein] + [thioredoxin]-disulfide + H2O = L-methionyl-(S)-S-oxide-[protein] + [thioredoxin]-dithiol. The catalysed reaction is [thioredoxin]-disulfide + L-methionine + H2O = L-methionine (S)-S-oxide + [thioredoxin]-dithiol. Its function is as follows. Has an important function as a repair enzyme for proteins that have been inactivated by oxidation. Catalyzes the reversible oxidation-reduction of methionine sulfoxide in proteins to methionine. The chain is Peptide methionine sulfoxide reductase MsrA from Pseudomonas aeruginosa (strain UCBPP-PA14).